A 44-amino-acid chain; its full sequence is Photosystem I reaction center subunit IX (44 aa).

A helical transmembrane segment spans residues 7-27; sequence YLSTVPVLTTLWFGSLAGLLI.

This sequence belongs to the PsaJ family.

Its subcellular location is the plastid. The protein resides in the chloroplast thylakoid membrane. Functionally, may help in the organization of the PsaE and PsaF subunits. In Dioscorea elephantipes (Elephant's foot yam), this protein is Photosystem I reaction center subunit IX.